Reading from the N-terminus, the 301-residue chain is Developmental pluripotency-associated protein 2 (301 aa).

The interval lysine 31–isoleucine 85 is disordered. Positions aspartate 39 to aspartate 52 are enriched in polar residues. Residues leucine 60 to threonine 70 are compositionally biased toward basic residues. The region spanning isoleucine 85–serine 119 is the SAP domain.

Interacts with DPPA4. As to expression, not detected in adult tissues.

The protein localises to the nucleus. Its function is as follows. Binds to target gene promoters, including NKX2-5 and SYCE1, but not GATA4, and may be involved in the maintenance of the active epigenetic status of these genes. This Mus musculus (Mouse) protein is Developmental pluripotency-associated protein 2 (Dppa2).